Reading from the N-terminus, the 398-residue chain is Ubiquitin carboxyl-terminal hydrolase 17-like protein 6 (398 aa).

Residues 80 to 375 (AGLQNMGNTC…QAYVLFYIQK (296 aa)) enclose the USP domain. The active-site Nucleophile is cysteine 89. Histidine 334 acts as the Proton acceptor in catalysis.

This sequence belongs to the peptidase C19 family. USP17 subfamily.

It localises to the nucleus. It is found in the cytoplasm. The catalysed reaction is Thiol-dependent hydrolysis of ester, thioester, amide, peptide and isopeptide bonds formed by the C-terminal Gly of ubiquitin (a 76-residue protein attached to proteins as an intracellular targeting signal).. Deubiquitinating enzyme that removes conjugated ubiquitin from specific proteins to regulate different cellular processes that may include cell proliferation, progression through the cell cycle, cell migration, and the cellular response to viral infection. Seems to be non-functional in the regulation of apoptosis. This chain is Ubiquitin carboxyl-terminal hydrolase 17-like protein 6 (USP17L6P), found in Homo sapiens (Human).